Reading from the N-terminus, the 105-residue chain is Small ribosomal subunit protein uS17 (105 aa).

This sequence belongs to the universal ribosomal protein uS17 family. In terms of assembly, part of the 30S ribosomal subunit.

One of the primary rRNA binding proteins, it binds specifically to the 5'-end of 16S ribosomal RNA. This chain is Small ribosomal subunit protein uS17, found in Thermus aquaticus.